Reading from the N-terminus, the 571-residue chain is Hsp70-Hsp90 organizing protein 2 (571 aa).

TPR repeat units follow at residues 2-35, 37-69, and 70-103; these read ADEAKAKGNAAFSSGDFNSAVNHFTDAINLTPTN, VLFSNRSAAHASLNHYDEALSDAKKTVELKPDW, and GKGYSRLGAAHLGLNQFDEAVEAYSKGLEIDPSN. The disordered stretch occupies residues 117-137; it reads ASRSRASAPNPFGDAFQGPEM. One can recognise an STI1 1 domain in the interval 134-173; sequence GPEMWSKLTADPSTRGLLKQPDFVNMMKEIQRNPSNLNLY. Residue S168 is modified to Phosphoserine. A compositionally biased stretch (acidic residues) spans 198 to 207; that stretch reads DDMEIGEEEM. Residues 198–245 are disordered; that stretch reads DDMEIGEEEMAVPSRKEPEVEKKRKPEPEPEPEPEFGEEKQKKLKAQK. Basic and acidic residues-rich tracts occupy residues 211–225 and 234–245; these read SRKEPEVEKKRKPEP and GEEKQKKLKAQK. The Bipartite nuclear localization signal motif lies at 240 to 257; that stretch reads KLKAQKEKELGNAAYKKK. TPR repeat units follow at residues 243 to 276, 278 to 310, 322 to 355, 382 to 415, 417 to 449, and 450 to 483; these read AQKEKELGNAAYKKKDFETAIQHYSTAMEIDDED, SYITNRAAVHLEMGKYDECIKDCDKAVERGREL, TRKGTALGKMAKVSKDYEPVIQTYQKALTEHRNP, GDEEREKGNDFFKEQKYPDAVRHYTEAIKRNPKD, RAYSNRAACYTKLGAMPEGLKDAEKCIELDPTF, and LKGYSRKGAVQFFMKEYDNAMETYQKGLEHDPNN. The STI1 2 domain maps to 520-559; that stretch reads DPEIQNILTDPVMRQVLSDLQENPAAAQKHMQNPMIMNKI.

Co-chaperone that forms a complex with HSP70 and HSP90 and preproteins (e.g. chloroplast preproteins). Phosphorylated. Post-translationally, acetylated.

The protein resides in the cytoplasm. It localises to the nucleus. Its function is as follows. Mediates the association of the molecular chaperones HSP70 and HSP90. Mediates nuclear encoded chloroplast preproteins binding to HSP90 prior to chloroplastic sorting. In Arabidopsis thaliana (Mouse-ear cress), this protein is Hsp70-Hsp90 organizing protein 2 (HOP2).